A 307-amino-acid polypeptide reads, in one-letter code: Ribosomal protein L11 methyltransferase (307 aa).

4 residues coordinate S-adenosyl-L-methionine: Thr-162, Gly-183, Asp-205, and Asn-244.

The protein belongs to the methyltransferase superfamily. PrmA family.

The protein localises to the cytoplasm. The enzyme catalyses L-lysyl-[protein] + 3 S-adenosyl-L-methionine = N(6),N(6),N(6)-trimethyl-L-lysyl-[protein] + 3 S-adenosyl-L-homocysteine + 3 H(+). In terms of biological role, methylates ribosomal protein L11. This chain is Ribosomal protein L11 methyltransferase, found in Bordetella parapertussis (strain 12822 / ATCC BAA-587 / NCTC 13253).